A 32-amino-acid polypeptide reads, in one-letter code: Toxic phospholipase A2 (32 aa).

It belongs to the phospholipase A2 family. Group III subfamily. Ca(2+) is required as a cofactor.

Its subcellular location is the secreted. It localises to the nematocyst. The catalysed reaction is a 1,2-diacyl-sn-glycero-3-phosphocholine + H2O = a 1-acyl-sn-glycero-3-phosphocholine + a fatty acid + H(+). Functionally, PLA2 catalyzes the calcium-dependent hydrolysis of the 2-acyl groups in 3-sn-phosphoglycerides. This chain is Toxic phospholipase A2, found in Rhopilema nomadica (Mediteranean medusa).